The chain runs to 204 residues: Sec-independent protein translocase protein TatB (204 aa).

The chain crosses the membrane as a helical span at residues M1–G21. Polar residues predominate over residues V154–S166. The tract at residues V154–S204 is disordered.

This sequence belongs to the TatB family. The Tat system comprises two distinct complexes: a TatABC complex, containing multiple copies of TatA, TatB and TatC subunits, and a separate TatA complex, containing only TatA subunits. Substrates initially bind to the TatABC complex, which probably triggers association of the separate TatA complex to form the active translocon.

Its subcellular location is the cell inner membrane. Functionally, part of the twin-arginine translocation (Tat) system that transports large folded proteins containing a characteristic twin-arginine motif in their signal peptide across membranes. Together with TatC, TatB is part of a receptor directly interacting with Tat signal peptides. TatB may form an oligomeric binding site that transiently accommodates folded Tat precursor proteins before their translocation. In Mannheimia succiniciproducens (strain KCTC 0769BP / MBEL55E), this protein is Sec-independent protein translocase protein TatB.